A 429-amino-acid polypeptide reads, in one-letter code: Large ribosomal subunit protein mL37 (429 aa).

The N-terminal 29 residues, 1 to 29 (MALRPVVLRRAPAHSRGILTRPGPPRPRG), are a transit peptide targeting the mitochondrion. A disordered region spans residues 12–45 (PAHSRGILTRPGPPRPRGPLPRTPWTTRGPPPDQ). Over residues 22–33 (PGPPRPRGPLPR) the composition is skewed to pro residues.

Belongs to the mitochondrion-specific ribosomal protein mL37 family. In terms of assembly, component of the mitochondrial ribosome large subunit (39S) which comprises a 16S rRNA and about 50 distinct proteins.

The protein resides in the mitochondrion. This is Large ribosomal subunit protein mL37 (MRPL37) from Gallus gallus (Chicken).